Reading from the N-terminus, the 683-residue chain is Synaptic vesicle glycoprotein 2B (683 aa).

Residues 1-42 (MDDYKYQDNYGGYAPSDGYYRGNESNPEEDAQSDVTEGHDEE) are disordered. Topologically, residues 1–108 (MDDYKYQDNY…MDECGHGRFQ (108 aa)) are cytoplasmic. Residue S33 is modified to Phosphoserine. T36 is subject to Phosphothreonine. The chain crosses the membrane as a helical span at residues 109–129 (WILFFVLGLALMADGVEVFVV). The Extracellular segment spans residues 130–148 (SFALPSAEKDMCLSSSKKG). Residues 149–169 (MLGMIVYLGMMAGAFILGGLA) form a helical membrane-spanning segment. The Cytoplasmic portion of the chain corresponds to 170-182 (DKLGRKRVLSMSL). A helical transmembrane segment spans residues 183–203 (AVNASFASLSSFVQGYGAFLF). Residues 204–205 (CR) lie on the Extracellular side of the membrane. The helical transmembrane segment at 206 to 226 (LISGIGIGGALPIVFAYFSEF) threads the bilayer. Over 227–237 (LSREKRGEHLS) the chain is Cytoplasmic. A helical transmembrane segment spans residues 238–258 (WLGIFWMTGGLYASAMAWSII). Topologically, residues 259–277 (PHYGWGFSMGTNYHFHSWR) are extracellular. Residues 278 to 298 (VFVIVCALPCTVSMVALKFMP) form a helical membrane-spanning segment. Over 299-390 (ESPRFLLEMG…CVMGPYRMNT (92 aa)) the chain is Cytoplasmic. Residues 391-411 (LILAVVWFAMAFSYYGLTVWF) traverse the membrane as a helical segment. Over 412–535 (PDMIRYFQDE…CHMDLEQDND (124 aa)) the chain is Extracellular. At Y423 the chain carries Phosphotyrosine. N441, N491, and N516 each carry an N-linked (GlcNAc...) asparagine glycan. A helical membrane pass occupies residues 536–556 (FLIYLVSFLGSLSVLPGNIIS). The Cytoplasmic segment spans residues 557-565 (ALLMDRIGR). The helical transmembrane segment at 566–586 (LKMIGGSMLISAVCCFFLFFG) threads the bilayer. Residues 587-592 (NSESAM) lie on the Extracellular side of the membrane. The chain crosses the membrane as a helical span at residues 593–613 (IGWQCLFCGTSIAAWNALDVI). Topologically, residues 614–626 (TVELYPTNQRATA) are cytoplasmic. A helical transmembrane segment spans residues 627–649 (FGILNGLCKFGAILGNTIFASFV). At 650 to 653 (GITK) the chain is on the extracellular side. A helical membrane pass occupies residues 654-672 (VVPILLAAASLVGGGLIAL). Topologically, residues 673–683 (RLPETREQVLM) are cytoplasmic.

It belongs to the major facilitator superfamily. Interacts with SYT1 in a calcium-independent manner. Forms a complex with SYT1, syntaxin-1 and SNAP25. In terms of assembly, (Microbial infection) Interacts with C.botulinum neurotoxin type A2 (BoNT/A, botA). Interaction is improved by glycosylation of SV2. N-glycosylated. Post-translationally, the N-terminal cytoplasmic domain is phosphorylated by CK1.

The protein resides in the cytoplasmic vesicle. It is found in the secretory vesicle. The protein localises to the synaptic vesicle membrane. Its subcellular location is the acrosome. Functionally, probably plays a role in the control of regulated secretion in neural and endocrine cells. In terms of biological role, (Microbial infection) Receptor for the C.botulinum neurotoxin type A2 (BoNT/A, botA); glycosylation is not essential but enhances the interaction. Probably also serves as a receptor for the closely related C.botulinum neurotoxin type A1. The polypeptide is Synaptic vesicle glycoprotein 2B (SV2B) (Homo sapiens (Human)).